A 127-amino-acid polypeptide reads, in one-letter code: ADIGMNIAGPAYNFGYNTGDAGGHSRVESGTAGAAAGSYSYIDANGDRRTVHYTAGPDGFKASGDIGVDRRTAAAAAALAALAPKAPVAAAPVAPVAPVVPGAWGYWGAPHVYSAVYPGLAGYAAHW.

The Chitin-binding type R&amp;R domain maps to 9-87; sequence GPAYNFGYNT…ALAALAPKAP (79 aa).

Its function is as follows. Component of the rigid cuticle of the spider. The polypeptide is Adult-specific rigid cuticular protein 12.6 (Araneus diadematus (European garden spider)).